Here is a 363-residue protein sequence, read N- to C-terminus: Phosphoribosylformylglycinamidine cyclo-ligase (363 aa).

It belongs to the AIR synthase family.

The protein resides in the cytoplasm. The catalysed reaction is 2-formamido-N(1)-(5-O-phospho-beta-D-ribosyl)acetamidine + ATP = 5-amino-1-(5-phospho-beta-D-ribosyl)imidazole + ADP + phosphate + H(+). Its pathway is purine metabolism; IMP biosynthesis via de novo pathway; 5-amino-1-(5-phospho-D-ribosyl)imidazole from N(2)-formyl-N(1)-(5-phospho-D-ribosyl)glycinamide: step 2/2. The protein is Phosphoribosylformylglycinamidine cyclo-ligase of Brucella anthropi (strain ATCC 49188 / DSM 6882 / CCUG 24695 / JCM 21032 / LMG 3331 / NBRC 15819 / NCTC 12168 / Alc 37) (Ochrobactrum anthropi).